We begin with the raw amino-acid sequence, 330 residues long: PDZ and LIM domain protein 4 (330 aa).

Residues arginine 8–glutamate 84 enclose the PDZ domain. Disordered regions lie at residues glutamate 106 to alanine 152 and leucine 163 to asparagine 182. A compositionally biased stretch (polar residues) spans glutamine 139 to alanine 152. One can recognise an LIM zinc-binding domain in the interval cysteine 255–histidine 305.

Interacts (via LIM domain) with PTPN13. Interacts (via PDZ domain) with ACTN1.

The protein resides in the cytoplasm. The protein localises to the cytoskeleton. Its subcellular location is the cell projection. It is found in the dendritic spine. It localises to the early endosome membrane. The protein resides in the recycling endosome membrane. The protein localises to the nucleus. Its subcellular location is the perinuclear region. It is found in the lamellipodium. It localises to the synapse. The protein resides in the synaptosome. Suppresses SRC activation by recognizing and binding to active SRC and facilitating PTPN13-mediated dephosphorylation of SRC 'Tyr-419' leading to its inactivation. Inactivated SRC dissociates from this protein allowing the initiation of a new SRC inactivation cycle. Involved in reorganization of the actin cytoskeleton. In nonmuscle cells, binds to ACTN1 (alpha-actinin-1), increases the affinity of ACTN1 to F-actin (filamentous actin), and promotes formation of actin stress fibers. Involved in regulation of the synaptic AMPA receptor transport in dendritic spines of hippocampal pyramidal neurons directing the receptors toward an insertion at the postsynaptic membrane. Links endosomal surface-internalized GRIA1-containing AMPA receptors to the alpha-actinin/actin cytoskeleton. Increases AMPA receptor-mediated excitatory postsynaptic currents in neurons. This is PDZ and LIM domain protein 4 (PDLIM4) from Gallus gallus (Chicken).